The sequence spans 500 residues: Cytochrome P450 81F1 (500 aa).

Residues 1–21 (MLYFILLPLLFLVISYKFLYS) traverse the membrane as a helical segment. A Glycyl lysine isopeptide (Lys-Gly) (interchain with G-Cter in ubiquitin) cross-link involves residue Lys248. Heme is bound at residue Cys438.

It belongs to the cytochrome P450 family. Requires heme as cofactor.

The protein resides in the membrane. Its pathway is secondary metabolite biosynthesis. Its function is as follows. Involved in indole glucosinolate biosynthesis. Catalyzes hydroxylation reactions of the glucosinolate indole ring. Converts indol-3-yl-methylglucosinolate (I3M) to 4-hydroxy-indol-3-yl-methylglucosinolate (4OH-I3M) and/or 1-hydroxy-indol-3-yl-methylglucosinolate (1OH-I3M) intermediates. These hydroxy intermediates are converted to 4-methoxy-indol-3-yl-methylglucosinolate (4MO-I3M) and 1-methoxy-indol-3-yl-methylglucosinolate (1MO-I3M) by indole glucosinolate methyltransferase 1 and 2 (IGMT1 and IGMT2). The sequence is that of Cytochrome P450 81F1 from Arabidopsis thaliana (Mouse-ear cress).